We begin with the raw amino-acid sequence, 854 residues long: Protein translocase subunit SecA (854 aa).

ATP is bound by residues Gln-81, 99 to 103 (GEGKT), and Asp-487.

It belongs to the SecA family. As to quaternary structure, monomer and homodimer. Part of the essential Sec protein translocation apparatus which comprises SecA, SecYEG and auxiliary proteins SecDF. Other proteins may also be involved.

Its subcellular location is the cell membrane. It is found in the cytoplasm. It carries out the reaction ATP + H2O + cellular proteinSide 1 = ADP + phosphate + cellular proteinSide 2.. Its function is as follows. Part of the Sec protein translocase complex. Interacts with the SecYEG preprotein conducting channel. Has a central role in coupling the hydrolysis of ATP to the transfer of proteins into and across the cell membrane, serving as an ATP-driven molecular motor driving the stepwise translocation of polypeptide chains across the membrane. This chain is Protein translocase subunit SecA, found in Mycoplasma mobile (strain ATCC 43663 / 163K / NCTC 11711) (Mesomycoplasma mobile).